The sequence spans 1036 residues: Cellulose synthase-like protein D1 (1036 aa).

Residues M1–N99 form a disordered region. Polar residues-rich tracts occupy residues T9 to R19 and N69 to E80. Over residues N86–P95 the composition is skewed to gly residues. 2 consecutive transmembrane segments (helical) span residues I178–W198 and A208–L228. Residue D308 is part of the active site. A disordered region spans residues A626 to N665. Low complexity predominate over residues T631 to S642. D741 is an active-site residue. 6 consecutive transmembrane segments (helical) span residues I817–F837, I848–E868, L895–L915, G938–A958, I962–V982, and T1002–I1022.

This sequence belongs to the glycosyltransferase 2 family. Plant cellulose synthase-like D subfamily.

It is found in the golgi apparatus membrane. Thought to be a Golgi-localized beta-glycan synthase that polymerize the backbones of noncellulosic polysaccharides (hemicelluloses) of plant cell wall. The polypeptide is Cellulose synthase-like protein D1 (CSLD1) (Arabidopsis thaliana (Mouse-ear cress)).